We begin with the raw amino-acid sequence, 343 residues long: N-acetyl-gamma-glutamyl-phosphate reductase (343 aa).

Cys-147 is a catalytic residue.

The protein belongs to the NAGSA dehydrogenase family. Type 1 subfamily.

It localises to the cytoplasm. It carries out the reaction N-acetyl-L-glutamate 5-semialdehyde + phosphate + NADP(+) = N-acetyl-L-glutamyl 5-phosphate + NADPH + H(+). It participates in amino-acid biosynthesis; L-arginine biosynthesis; N(2)-acetyl-L-ornithine from L-glutamate: step 3/4. Catalyzes the NADPH-dependent reduction of N-acetyl-5-glutamyl phosphate to yield N-acetyl-L-glutamate 5-semialdehyde. This chain is N-acetyl-gamma-glutamyl-phosphate reductase, found in Staphylococcus aureus (strain USA300).